A 349-amino-acid chain; its full sequence is Phosphoribosylformylglycinamidine cyclo-ligase (349 aa).

The protein belongs to the AIR synthase family.

The protein localises to the cytoplasm. It carries out the reaction 2-formamido-N(1)-(5-O-phospho-beta-D-ribosyl)acetamidine + ATP = 5-amino-1-(5-phospho-beta-D-ribosyl)imidazole + ADP + phosphate + H(+). It participates in purine metabolism; IMP biosynthesis via de novo pathway; 5-amino-1-(5-phospho-D-ribosyl)imidazole from N(2)-formyl-N(1)-(5-phospho-D-ribosyl)glycinamide: step 2/2. This chain is Phosphoribosylformylglycinamidine cyclo-ligase, found in Lawsonia intracellularis (strain PHE/MN1-00).